Here is a 77-residue protein sequence, read N- to C-terminus: MSANGNAALGVRLTEDQVKVLEENFTKVSKHPDETTLMLIAAECGLSEEQTAVWFRMRNAQWRKAEGLPAELGSVKD.

Positions 7-65 (AALGVRLTEDQVKVLEENFTKVSKHPDETTLMLIAAECGLSEEQTAVWFRMRNAQWRKA) form a DNA-binding region, homeobox; degenerate.

It is found in the nucleus. The protein resides in the cytoplasm. In terms of biological role, atypical homeodomain protein which does not bind DNA and is required to modulate cardiac growth and development. May act via an interaction with SRF, leading to modulate the expression of SRF-dependent cardiac-specific genes and cardiac development. May act as a co-chaperone for HSPA1A and HSPA1B chaperone proteins and assist in chaperone-mediated protein refolding. This Danio rerio (Zebrafish) protein is Homeodomain-only protein (hopx).